Reading from the N-terminus, the 170-residue chain is Adenine phosphoribosyltransferase (170 aa).

This sequence belongs to the purine/pyrimidine phosphoribosyltransferase family. Homodimer.

The protein localises to the cytoplasm. It catalyses the reaction AMP + diphosphate = 5-phospho-alpha-D-ribose 1-diphosphate + adenine. The protein operates within purine metabolism; AMP biosynthesis via salvage pathway; AMP from adenine: step 1/1. In terms of biological role, catalyzes a salvage reaction resulting in the formation of AMP, that is energically less costly than de novo synthesis. In Bacillus cereus (strain G9842), this protein is Adenine phosphoribosyltransferase.